The following is a 736-amino-acid chain: 1,4-alpha-glucan branching enzyme GlgB (736 aa).

The active-site Nucleophile is aspartate 415. Glutamate 468 (proton donor) is an active-site residue.

This sequence belongs to the glycosyl hydrolase 13 family. GlgB subfamily. As to quaternary structure, monomer.

The enzyme catalyses Transfers a segment of a (1-&gt;4)-alpha-D-glucan chain to a primary hydroxy group in a similar glucan chain.. Its pathway is glycan biosynthesis; glycogen biosynthesis. In terms of biological role, catalyzes the formation of the alpha-1,6-glucosidic linkages in glycogen by scission of a 1,4-alpha-linked oligosaccharide from growing alpha-1,4-glucan chains and the subsequent attachment of the oligosaccharide to the alpha-1,6 position. The protein is 1,4-alpha-glucan branching enzyme GlgB of Rhodopirellula baltica (strain DSM 10527 / NCIMB 13988 / SH1).